Here is a 120-residue protein sequence, read N- to C-terminus: Small ribosomal subunit protein uS13 (120 aa).

The disordered stretch occupies residues 94–120 (GLPLRGQRTRTNARTRKGPRKAIAGKK).

The protein belongs to the universal ribosomal protein uS13 family. In terms of assembly, part of the 30S ribosomal subunit. Forms a loose heterodimer with protein S19. Forms two bridges to the 50S subunit in the 70S ribosome.

Functionally, located at the top of the head of the 30S subunit, it contacts several helices of the 16S rRNA. In the 70S ribosome it contacts the 23S rRNA (bridge B1a) and protein L5 of the 50S subunit (bridge B1b), connecting the 2 subunits; these bridges are implicated in subunit movement. Contacts the tRNAs in the A and P-sites. The sequence is that of Small ribosomal subunit protein uS13 from Aromatoleum aromaticum (strain DSM 19018 / LMG 30748 / EbN1) (Azoarcus sp. (strain EbN1)).